Consider the following 172-residue polypeptide: SsrA-binding protein (172 aa).

Belongs to the SmpB family.

It localises to the cytoplasm. Functionally, required for rescue of stalled ribosomes mediated by trans-translation. Binds to transfer-messenger RNA (tmRNA), required for stable association of tmRNA with ribosomes. tmRNA and SmpB together mimic tRNA shape, replacing the anticodon stem-loop with SmpB. tmRNA is encoded by the ssrA gene; the 2 termini fold to resemble tRNA(Ala) and it encodes a 'tag peptide', a short internal open reading frame. During trans-translation Ala-aminoacylated tmRNA acts like a tRNA, entering the A-site of stalled ribosomes, displacing the stalled mRNA. The ribosome then switches to translate the ORF on the tmRNA; the nascent peptide is terminated with the 'tag peptide' encoded by the tmRNA and targeted for degradation. The ribosome is freed to recommence translation, which seems to be the essential function of trans-translation. The chain is SsrA-binding protein from Dehalococcoides mccartyi (strain ATCC BAA-2266 / KCTC 15142 / 195) (Dehalococcoides ethenogenes (strain 195)).